The chain runs to 272 residues: Phosphoglycolate phosphatase (272 aa).

Asp-19 acts as the Nucleophile in catalysis. Mg(2+) contacts are provided by Asp-19, Asp-21, and Asp-182.

The protein belongs to the HAD-like hydrolase superfamily. CbbY/CbbZ/Gph/YieH family. The cofactor is Mg(2+).

It catalyses the reaction 2-phosphoglycolate + H2O = glycolate + phosphate. It functions in the pathway organic acid metabolism; glycolate biosynthesis; glycolate from 2-phosphoglycolate: step 1/1. In terms of biological role, specifically catalyzes the dephosphorylation of 2-phosphoglycolate. Is involved in the dissimilation of the intracellular 2-phosphoglycolate formed during the DNA repair of 3'-phosphoglycolate ends, a major class of DNA lesions induced by oxidative stress. The chain is Phosphoglycolate phosphatase from Pseudomonas savastanoi pv. phaseolicola (strain 1448A / Race 6) (Pseudomonas syringae pv. phaseolicola (strain 1448A / Race 6)).